The primary structure comprises 353 residues: DNA integrity scanning protein DisA (353 aa).

Residues 6-144 (DKELMNILKI…GGIKYVLRDS (139 aa)) form the DAC domain. Residues Gly-73, Leu-91, and 104 to 108 (TRHRT) each bind ATP.

Belongs to the DisA family. As to quaternary structure, homooctamer. It depends on Mg(2+) as a cofactor.

The catalysed reaction is 2 ATP = 3',3'-c-di-AMP + 2 diphosphate. Functionally, participates in a DNA-damage check-point that is active prior to asymmetric division when DNA is damaged. DisA forms globular foci that rapidly scan along the chromosomes during sporulation, searching for lesions. When a lesion is present, DisA pauses at the lesion site. This triggers a cellular response that culminates in a temporary block in sporulation initiation. Its function is as follows. Also has diadenylate cyclase activity, catalyzing the condensation of 2 ATP molecules into cyclic di-AMP (c-di-AMP). c-di-AMP acts as a signaling molecule that couples DNA integrity with progression of sporulation. The rise in c-di-AMP level generated by DisA while scanning the chromosome, operates as a positive signal that advances sporulation; upon encountering a lesion, the DisA focus arrests at the damaged site and halts c-di-AMP synthesis. The sequence is that of DNA integrity scanning protein DisA from Clostridium botulinum (strain 657 / Type Ba4).